The primary structure comprises 346 residues: Large ribosomal subunit protein uL10 (346 aa).

The segment at 305–346 is disordered; it reads EVPAAPAPEAKEEKKEEAEEEEEEKKEVSEEDLSAGLGALFG. Residues 322 to 337 show a composition bias toward acidic residues; that stretch reads AEEEEEEKKEVSEEDL.

The protein belongs to the universal ribosomal protein uL10 family. As to quaternary structure, part of the 50S ribosomal subunit. Forms part of the ribosomal stalk which helps the ribosome interact with GTP-bound translation factors. Forms a heptameric L10(L12)2(L12)2(L12)2 complex, where L10 forms an elongated spine to which the L12 dimers bind in a sequential fashion.

In terms of biological role, forms part of the ribosomal stalk, playing a central role in the interaction of the ribosome with GTP-bound translation factors. In Ignicoccus hospitalis (strain KIN4/I / DSM 18386 / JCM 14125), this protein is Large ribosomal subunit protein uL10.